The following is a 518-amino-acid chain: Sensor protein kinase HptS (518 aa).

A run of 2 helical transmembrane segments spans residues 20–40 (IFPV…IYIW) and 222–242 (GITL…FGFI). Residues 297-513 (EQLIHSIEHT…LICYKIPLSR (217 aa)) enclose the Histidine kinase domain. A Phosphohistidine; by autocatalysis modification is found at histidine 325.

In terms of processing, autophosphorylated.

The protein resides in the cell membrane. The enzyme catalyses ATP + protein L-histidine = ADP + protein N-phospho-L-histidine.. In terms of biological role, member of the two-component regulatory system HptS/HptR that regulates genes involved in hexose phosphate transport system in response to changes in extracellular phosphate sources. May act as a sensor protein kinase which is autophosphorylated at a histidine residue and transfers its phosphate group to the conserved aspartic acid residue in the regulatory domain of HptS. In turn, HptS antagonizes CcpA-dependent transcription of a subset of CcpA-regulated genes involved in antibiotic susceptibility. The polypeptide is Sensor protein kinase HptS (hptS) (Staphylococcus aureus (strain Mu50 / ATCC 700699)).